Here is a 324-residue protein sequence, read N- to C-terminus: Succinylglutamate desuccinylase (324 aa).

Zn(2+)-binding residues include His53, Glu56, and His148. Glu211 is an active-site residue.

This sequence belongs to the AspA/AstE family. Succinylglutamate desuccinylase subfamily. Zn(2+) serves as cofactor.

It carries out the reaction N-succinyl-L-glutamate + H2O = L-glutamate + succinate. Its pathway is amino-acid degradation; L-arginine degradation via AST pathway; L-glutamate and succinate from L-arginine: step 5/5. In terms of biological role, transforms N(2)-succinylglutamate into succinate and glutamate. The chain is Succinylglutamate desuccinylase from Acinetobacter baumannii (strain AB0057).